The sequence spans 254 residues: Leucyl/phenylalanyl-tRNA--protein transferase (254 aa).

Residues 1–10 (MSSQPPPLPW) are compositionally biased toward pro residues. Residues 1 to 28 (MSSQPPPLPWLDPNQDFPPTSQAWDENS) are disordered.

This sequence belongs to the L/F-transferase family.

Its subcellular location is the cytoplasm. It catalyses the reaction N-terminal L-lysyl-[protein] + L-leucyl-tRNA(Leu) = N-terminal L-leucyl-L-lysyl-[protein] + tRNA(Leu) + H(+). The enzyme catalyses N-terminal L-arginyl-[protein] + L-leucyl-tRNA(Leu) = N-terminal L-leucyl-L-arginyl-[protein] + tRNA(Leu) + H(+). The catalysed reaction is L-phenylalanyl-tRNA(Phe) + an N-terminal L-alpha-aminoacyl-[protein] = an N-terminal L-phenylalanyl-L-alpha-aminoacyl-[protein] + tRNA(Phe). Its function is as follows. Functions in the N-end rule pathway of protein degradation where it conjugates Leu, Phe and, less efficiently, Met from aminoacyl-tRNAs to the N-termini of proteins containing an N-terminal arginine or lysine. The sequence is that of Leucyl/phenylalanyl-tRNA--protein transferase from Albidiferax ferrireducens (strain ATCC BAA-621 / DSM 15236 / T118) (Rhodoferax ferrireducens).